Reading from the N-terminus, the 180-residue chain is Endoribonuclease YbeY (180 aa).

The Zn(2+) site is built by His-118, His-122, and His-128.

This sequence belongs to the endoribonuclease YbeY family. Zn(2+) is required as a cofactor.

It localises to the cytoplasm. Functionally, single strand-specific metallo-endoribonuclease involved in late-stage 70S ribosome quality control and in maturation of the 3' terminus of the 16S rRNA. The chain is Endoribonuclease YbeY from Rhodococcus erythropolis (strain PR4 / NBRC 100887).